Here is a 321-residue protein sequence, read N- to C-terminus: Olfactory receptor 51G1 (321 aa).

The Extracellular portion of the chain corresponds to 1–27 (MTILLNSSLQRATFFLTGFQGLEGLHG). N6 is a glycosylation site (N-linked (GlcNAc...) asparagine). The chain crosses the membrane as a helical span at residues 28–48 (WISIPFCFIYLTVILGNLTIL). Residues 49–56 (HVICTDAT) are Cytoplasmic-facing. Residues 57–77 (LHGPMYYFLGMLAVTDLGLCL) form a helical membrane-spanning segment. The Extracellular portion of the chain corresponds to 78–101 (STLPTVLGIFWFDTREIGIPACFT). C99 and C191 form a disulfide bridge. Residues 102 to 122 (QLFFIHTLSSMESSVLLSMSI) form a helical membrane-spanning segment. At 123 to 141 (DRYVAVCNPLHDSTVLTPA) the chain is on the cytoplasmic side. The helical transmembrane segment at 142–162 (CIVKMGLSSVLRSALLILPLP) threads the bilayer. The Extracellular portion of the chain corresponds to 163-198 (FLLKRFQYCHSHVLAHAYCLHLEIMKLACSSIIVNH). A helical membrane pass occupies residues 199–219 (IYGLFVVACTVGVDSLLIFLS). Residues 220–239 (YALILRTVLSIASHQERLRA) are Cytoplasmic-facing. The chain crosses the membrane as a helical span at residues 240–260 (LNTCVSHICAVLLFYIPMIGL). At 261–275 (SLVHRFGEHLPRVVH) the chain is on the extracellular side. The helical transmembrane segment at 276-296 (LFMSYVYLLVPPLMNPIIYSI) threads the bilayer. Over 297–321 (KTKQIRQRIIKKFQFIKSLRCFWKD) the chain is Cytoplasmic.

It belongs to the G-protein coupled receptor 1 family.

It localises to the cell membrane. In terms of biological role, odorant receptor. In Homo sapiens (Human), this protein is Olfactory receptor 51G1 (OR51G1).